The sequence spans 331 residues: UAP56-interacting factor (331 aa).

Positions 16 to 34 (APDKVDMSLDDIIRLNKKE) match the UAP56-binding motif motif. Disordered stretches follow at residues 30–51 (LNKK…LQKG), 63–99 (RARG…RRRG), and 158–193 (GQRR…TQRE). Polar residues predominate over residues 166-175 (TDIQRGLNST).

Belongs to the UIF family.

The protein localises to the nucleus. It is found in the nucleoplasm. It localises to the nucleus speckle. Required for mRNA export from the nucleus to the cytoplasm. Acts as an adapter that uses the ddx39b/uap56-nfx1 pathway to ensure efficient mRNA export and delivering to the nuclear pore. The polypeptide is UAP56-interacting factor (fyttd1) (Salmo salar (Atlantic salmon)).